The following is an 84-amino-acid chain: Mitochondrial import inner membrane translocase subunit Tim9 (84 aa).

The Twin CX3C motif signature appears at 28-52 (CFMDCVKDFTTREVKPEETTCSESC). Intrachain disulfides connect Cys28–Cys52 and Cys32–Cys48.

Belongs to the small Tim family. As to quaternary structure, heterohexamer; composed of 3 copies of TIMM9 and 3 copies of TIMM10/TIM10A, named soluble 70 kDa complex. The complex forms a 6-bladed alpha-propeller structure and associates with the TIMM22 component of the TIM22 complex. Interacts with multi-pass transmembrane proteins in transit.

The protein localises to the mitochondrion inner membrane. Mitochondrial intermembrane chaperone that participates in the import and insertion of multi-pass transmembrane proteins into the mitochondrial inner membrane. May also be required for the transfer of beta-barrel precursors from the TOM complex to the sorting and assembly machinery (SAM complex) of the outer membrane. Acts as a chaperone-like protein that protects the hydrophobic precursors from aggregation and guide them through the mitochondrial intermembrane space. The protein is Mitochondrial import inner membrane translocase subunit Tim9 (timm9) of Danio rerio (Zebrafish).